The following is a 509-amino-acid chain: Cytochrome P450 monooxygenase cpaH (509 aa).

N-linked (GlcNAc...) asparagine glycosylation occurs at Asn15. Residues 31–51 (TTILLIGVTYCILVGIYRVTL) form a helical membrane-spanning segment. Residues Asn306 and Asn412 are each glycosylated (N-linked (GlcNAc...) asparagine). Cys453 is a heme binding site.

It belongs to the cytochrome P450 family. It depends on heme as a cofactor.

It is found in the membrane. Its pathway is secondary metabolite biosynthesis. Functionally, cytochrome P450 monooxygenase; part of the gene cluster that mediates the biosynthesis of the fungal neurotoxin cyclopiazonic acid (CPA), a nanomolar inhibitor of Ca(2+)-ATPase with a unique pentacyclic indole tetramic acid scaffold. The hybrid two module polyketide synthase-nonribosomal peptide synthetase (PKS-NRPS) cpaS incorporates acetyl-CoA, malonyl-CoA, and tryptophan (Trp) and utilizes a C-terminal redox-incompetent reductase domain to make and release the tryptophan tetramic acid, cyclo-acetoacetyl-L-tryptophan (c-AATrp), as the first intermediate in the pathway. CpaS catalyzes a Dieckmann-type cyclization on the N-acetoacetyl-Trp intermediate bound in thioester linkage to the phosphopantetheinyl arm of the T domain to form and release c-AATrp. CpaD then regiospecifically dimethylallylates c-AATrp to form beta-cyclopiazonic acid. CpaD discriminates against free Trp but accepts tryptophan-containing thiohydantoins, diketopiperazines, and linear peptides as substrates for C4-prenylation and also acts as a regiospecific O-dimethylallyltransferase (DMAT) on a tyrosine-derived tetramic acid. The beta-cyclopiazonate dehydrogenase cpaO then carries out the dehydrogenation of beta-CPA to yield an unstable enimine product, which is captured by intramolecular cyclization to create the pentacyclic fused scaffold of alpha-cyclopiazonate. Finally, the cytochrome P450 monooxygenase cpaH mediates the conversion of CPA into the less toxic 2-oxocyclopiazonic acid, the end product of the CPA pathway in A.oryza. The polypeptide is Cytochrome P450 monooxygenase cpaH (Aspergillus oryzae (Yellow koji mold)).